Consider the following 511-residue polypeptide: ATP synthase subunit alpha (511 aa).

Residue 169 to 176 (GDRQTGKT) coordinates ATP.

The protein belongs to the ATPase alpha/beta chains family. As to quaternary structure, F-type ATPases have 2 components, CF(1) - the catalytic core - and CF(0) - the membrane proton channel. CF(1) has five subunits: alpha(3), beta(3), gamma(1), delta(1), epsilon(1). CF(0) has three main subunits: a(1), b(2) and c(9-12). The alpha and beta chains form an alternating ring which encloses part of the gamma chain. CF(1) is attached to CF(0) by a central stalk formed by the gamma and epsilon chains, while a peripheral stalk is formed by the delta and b chains.

The protein resides in the cell inner membrane. The catalysed reaction is ATP + H2O + 4 H(+)(in) = ADP + phosphate + 5 H(+)(out). In terms of biological role, produces ATP from ADP in the presence of a proton gradient across the membrane. The alpha chain is a regulatory subunit. The chain is ATP synthase subunit alpha from Bartonella tribocorum (strain CIP 105476 / IBS 506).